A 413-amino-acid chain; its full sequence is Probable cysteine desulfurase (413 aa).

N6-(pyridoxal phosphate)lysine is present on Lys229. Cys368 (cysteine persulfide intermediate) is an active-site residue.

The protein belongs to the class-V pyridoxal-phosphate-dependent aminotransferase family. Csd subfamily. It depends on pyridoxal 5'-phosphate as a cofactor.

The catalysed reaction is (sulfur carrier)-H + L-cysteine = (sulfur carrier)-SH + L-alanine. Functionally, catalyzes the removal of elemental sulfur and selenium atoms from L-cysteine, L-cystine, L-selenocysteine, and L-selenocystine to produce L-alanine. In Staphylococcus epidermidis (strain ATCC 12228 / FDA PCI 1200), this protein is Probable cysteine desulfurase (csd).